Consider the following 426-residue polypeptide: Serine/threonine-protein kinase ssn3 (426 aa).

The Protein kinase domain maps to 41 to 368 (YHIVGFISSG…AREALEHPYF (328 aa)). Residues 47–55 (ISSGTYGRV) and Lys71 contribute to the ATP site. Asp173 acts as the Proton acceptor in catalysis. The interval 390–426 (RVTQDDNDIRSGSLPGTKRSGLPDDSLMGRAAKRLKE) is disordered.

It belongs to the protein kinase superfamily. CMGC Ser/Thr protein kinase family. CDC2/CDKX subfamily. In terms of assembly, component of the srb8-11 complex, a regulatory module of the Mediator complex. The cofactor is Mg(2+).

The protein resides in the nucleus. The catalysed reaction is L-seryl-[protein] + ATP = O-phospho-L-seryl-[protein] + ADP + H(+). It carries out the reaction L-threonyl-[protein] + ATP = O-phospho-L-threonyl-[protein] + ADP + H(+). It catalyses the reaction [DNA-directed RNA polymerase] + ATP = phospho-[DNA-directed RNA polymerase] + ADP + H(+). In terms of biological role, component of the srb8-11 complex. The srb8-11 complex is a regulatory module of the Mediator complex which is itself involved in regulation of basal and activated RNA polymerase II-dependent transcription. The srb8-11 complex may be involved in the transcriptional repression of a subset of genes regulated by Mediator. It may inhibit the association of the Mediator complex with RNA polymerase II to form the holoenzyme complex. The srb8-11 complex phosphorylates the C-terminal domain (CTD) of the largest subunit of RNA polymerase II. The polypeptide is Serine/threonine-protein kinase ssn3 (ssn3) (Aspergillus fumigatus (strain ATCC MYA-4609 / CBS 101355 / FGSC A1100 / Af293) (Neosartorya fumigata)).